The sequence spans 278 residues: tRNA (guanine-N(7)-)-methyltransferase (278 aa).

Positions 1 to 42 (MRHDGPMHVQPGVGLQSDTSSSTGTGSGPADEPEAEKSAWGY) are disordered. 4 residues coordinate S-adenosyl-L-methionine: glutamate 106, glutamate 131, asparagine 160, and aspartate 183. Aspartate 183 is a catalytic residue. Substrate-binding positions include lysine 187, aspartate 219, and 256–259 (TKYE).

Belongs to the class I-like SAM-binding methyltransferase superfamily. TrmB family.

It carries out the reaction guanosine(46) in tRNA + S-adenosyl-L-methionine = N(7)-methylguanosine(46) in tRNA + S-adenosyl-L-homocysteine. It functions in the pathway tRNA modification; N(7)-methylguanine-tRNA biosynthesis. Its function is as follows. Catalyzes the formation of N(7)-methylguanine at position 46 (m7G46) in tRNA. This Mycobacterium ulcerans (strain Agy99) protein is tRNA (guanine-N(7)-)-methyltransferase.